We begin with the raw amino-acid sequence, 348 residues long: Selenide, water dikinase (348 aa).

Residue C17 is part of the active site. Residues K20 and 47-49 each bind ATP; that span reads THD. D50 provides a ligand contact to Mg(2+). Residues D67, D90, and 138-140 each bind ATP; that span reads GHT. D90 contacts Mg(2+). A Mg(2+)-binding site is contributed by D226.

Belongs to the selenophosphate synthase 1 family. Class I subfamily. As to quaternary structure, homodimer. Mg(2+) serves as cofactor.

It carries out the reaction hydrogenselenide + ATP + H2O = selenophosphate + AMP + phosphate + 2 H(+). Its function is as follows. Synthesizes selenophosphate from selenide and ATP. The chain is Selenide, water dikinase from Porphyromonas gingivalis (strain ATCC 33277 / DSM 20709 / CIP 103683 / JCM 12257 / NCTC 11834 / 2561).